We begin with the raw amino-acid sequence, 124 residues long: Large ribosomal subunit protein bL12 (124 aa).

It belongs to the bacterial ribosomal protein bL12 family. In terms of assembly, homodimer. Part of the ribosomal stalk of the 50S ribosomal subunit. Forms a multimeric L10(L12)X complex, where L10 forms an elongated spine to which 2 to 4 L12 dimers bind in a sequential fashion. Binds GTP-bound translation factors.

Functionally, forms part of the ribosomal stalk which helps the ribosome interact with GTP-bound translation factors. Is thus essential for accurate translation. This is Large ribosomal subunit protein bL12 from Cupriavidus pinatubonensis (strain JMP 134 / LMG 1197) (Cupriavidus necator (strain JMP 134)).